A 213-amino-acid chain; its full sequence is RNA chaperone ProQ (213 aa).

The interval 105–150 is disordered; sequence ESQEKAKAKRAAQTPKAAPAGKAPAKKAPKKVAVPARKTERPAKAA. Positions 115–127 are enriched in low complexity; the sequence is AAQTPKAAPAGKA.

It belongs to the ProQ family.

The protein resides in the cytoplasm. Functionally, RNA chaperone with significant RNA binding, RNA strand exchange and RNA duplexing activities. This chain is RNA chaperone ProQ, found in Shewanella oneidensis (strain ATCC 700550 / JCM 31522 / CIP 106686 / LMG 19005 / NCIMB 14063 / MR-1).